The following is a 33-amino-acid chain: MSDIN-like toxin proprotein 5 (33 aa).

Positions 1–10 (MSDINATRLP) are excised as a propeptide. Positions 11–18 (IFWFIYFP) form a cross-link, cyclopeptide (Ile-Pro). A propeptide spanning residues 19–32 (CVGDNVDNTLTRGE) is cleaved from the precursor.

The protein belongs to the MSDIN fungal toxin family. Processed by the macrocyclase-peptidase enzyme POPB to yield a toxic cyclic octapeptide. POPB first removes 10 residues from the N-terminus. Conformational trapping of the remaining peptide forces the enzyme to release this intermediate rather than proceed to macrocyclization. The enzyme rebinds the remaining peptide in a different conformation and catalyzes macrocyclization of the N-terminal 8 residues.

Functionally, probable toxin that belongs to the MSDIN-like toxin family responsible for a large number of food poisoning cases and deaths. The sequence is that of MSDIN-like toxin proprotein 5 from Amanita phalloides (Death cap).